Here is a 134-residue protein sequence, read N- to C-terminus: Small ribosomal subunit protein uS8c (134 aa).

Belongs to the universal ribosomal protein uS8 family. Part of the 30S ribosomal subunit.

It localises to the plastid. The protein localises to the chloroplast. One of the primary rRNA binding proteins, it binds directly to 16S rRNA central domain where it helps coordinate assembly of the platform of the 30S subunit. The chain is Small ribosomal subunit protein uS8c (rps8) from Helianthus annuus (Common sunflower).